Consider the following 198-residue polypeptide: Syndecan-4 (198 aa).

An N-terminal signal peptide occupies residues 1-23 (MAPACLLAPLLLLLLGGFPLVPG). Residues 24–145 (ESIRETEVID…QGSNIFERTE (122 aa)) lie on the Extracellular side of the membrane. Disordered stretches follow at residues 42-76 (YFSGALPDDEDAGGSDDFELSGSGDLDDTEEPRPF) and 94-130 (AQPGIRVPSEPKELEENEVIPKRAPSDVGDDMSNKVS). 3 O-linked (Xyl...) (glycosaminoglycan) serine glycosylation sites follow: Ser44, Ser62, and Ser64. Acidic residues predominate over residues 48–71 (PDDEDAGGSDDFELSGSGDLDDTE). Positions 102-118 (SEPKELEENEVIPKRAP) are enriched in basic and acidic residues. Residues 146 to 170 (VLAALIVGGVVGILFAVFLILLLVY) traverse the membrane as a helical segment. Residues 171-198 (RMKKKDEGSYDLGKKPIYKKAPTNEFYA) lie on the Cytoplasmic side of the membrane.

This sequence belongs to the syndecan proteoglycan family. As to quaternary structure, homodimer. Interacts with CDCP1 and SDCBP. Interacts (via its cytoplasmic domain) with GIPC (via its PDZ domain). Interacts (via its cytoplasmic domain) with NUDT16L1. Interacts with DNM2; this interaction is markedly enhanced at focal ahesion site upon induction of focal adhesions and stress-fiber formation. In terms of processing, shedding is enhanced by a number of factors such as heparanase, thrombin or EGF. Also by stress and wound healing. PMA-mediated shedding is inhibited by TIMP3. Post-translationally, O-glycosylated; contains both chondroitin sulfate and heparan sulfate. Ser-44, Ser-62 and Ser-64 can all be modified by either chondroitin sulfate or heparan sulfate, and the protein exists in forms that contain only chondroitin sulfate, only heparan sulfate and both chondroitin sulfate and heparan sulfate. In terms of tissue distribution, ubiquitous. Highest levels in liver, kidney and lung.

The protein localises to the membrane. Its subcellular location is the secreted. Its function is as follows. Cell surface proteoglycan which regulates exosome biogenesis in concert with SDCBP and PDCD6IP. This is Syndecan-4 from Mus musculus (Mouse).